Reading from the N-terminus, the 212-residue chain is Imidazole glycerol phosphate synthase subunit HisH (212 aa).

One can recognise a Glutamine amidotransferase type-1 domain in the interval Met-1–Ala-212. Catalysis depends on Cys-79, which acts as the Nucleophile. Catalysis depends on residues His-187 and Glu-189.

Heterodimer of HisH and HisF.

The protein localises to the cytoplasm. The catalysed reaction is 5-[(5-phospho-1-deoxy-D-ribulos-1-ylimino)methylamino]-1-(5-phospho-beta-D-ribosyl)imidazole-4-carboxamide + L-glutamine = D-erythro-1-(imidazol-4-yl)glycerol 3-phosphate + 5-amino-1-(5-phospho-beta-D-ribosyl)imidazole-4-carboxamide + L-glutamate + H(+). It catalyses the reaction L-glutamine + H2O = L-glutamate + NH4(+). It functions in the pathway amino-acid biosynthesis; L-histidine biosynthesis; L-histidine from 5-phospho-alpha-D-ribose 1-diphosphate: step 5/9. IGPS catalyzes the conversion of PRFAR and glutamine to IGP, AICAR and glutamate. The HisH subunit catalyzes the hydrolysis of glutamine to glutamate and ammonia as part of the synthesis of IGP and AICAR. The resulting ammonia molecule is channeled to the active site of HisF. The polypeptide is Imidazole glycerol phosphate synthase subunit HisH (Nitratidesulfovibrio vulgaris (strain DSM 19637 / Miyazaki F) (Desulfovibrio vulgaris)).